We begin with the raw amino-acid sequence, 158 residues long: MGIGNENKGFITASADALINWVRTGSLWPVTTGLACCAVEMMHAGAARYDLDRFGIVFRPSPRQSDVLIVAGTLCNKMAPALRQVYDQMPDPKWVISMGSCANGGGYYHYSYSVVRGCDRIVPVDIYVPGCPPTAEALVYGIIQLQNKIIRKDTIARK.

[4Fe-4S] cluster contacts are provided by Cys36, Cys37, Cys101, and Cys131.

This sequence belongs to the complex I 20 kDa subunit family. In terms of assembly, NDH-1 is composed of 14 different subunits. Subunits NuoB, C, D, E, F, and G constitute the peripheral sector of the complex. It depends on [4Fe-4S] cluster as a cofactor.

The protein resides in the cell inner membrane. The enzyme catalyses a quinone + NADH + 5 H(+)(in) = a quinol + NAD(+) + 4 H(+)(out). NDH-1 shuttles electrons from NADH, via FMN and iron-sulfur (Fe-S) centers, to quinones in the respiratory chain. The immediate electron acceptor for the enzyme in this species is believed to be ubiquinone. Couples the redox reaction to proton translocation (for every two electrons transferred, four hydrogen ions are translocated across the cytoplasmic membrane), and thus conserves the redox energy in a proton gradient. The polypeptide is NADH-quinone oxidoreductase subunit B (Francisella tularensis subsp. tularensis (strain FSC 198)).